The sequence spans 472 residues: ESX-3 secretion system protein EccD3 (472 aa).

The next 11 helical transmembrane spans lie at 121 to 141 (WGIA…ALLA), 155 to 175 (LAGL…GLLI), 183 to 203 (GIAL…LAVP), 211 to 231 (VLLG…IPSA), 236 to 256 (VVAF…AAGA), 258 to 278 (LLWQ…ALLV), 327 to 347 (QSGF…AIAV), 349 to 369 (PEAL…AATL), 381 to 401 (AWLL…YTAT), 405 to 425 (VAAF…VVVA), and 450 to 470 (GLDV…AWVL).

Belongs to the EccD/Snm4 family. In terms of assembly, part of the ESX-3 / type VII secretion system (T7SS), which is composed of cytosolic and membrane components. The ESX-3 membrane complex is composed of EccB3, EccC3, EccD3 and EccE3.

It is found in the cell inner membrane. Functionally, part of the ESX-3 specialized secretion system, which is important for iron and zinc uptake or homeostasis. This is ESX-3 secretion system protein EccD3 from Mycobacterium tuberculosis (strain CDC 1551 / Oshkosh).